Here is a 317-residue protein sequence, read N- to C-terminus: Protein CbxX, chromosomal (317 aa).

The interval 1–21 is disordered; sequence MSAPETTAPLQPPAAPAASLP. Residue 85–92 coordinates ATP; it reads GNPGTGKT.

Belongs to the CbxX/CfxQ family.

Its function is as follows. Seems to be necessary for the expression of RuBisCO. This is Protein CbxX, chromosomal (cbxXC) from Cupriavidus necator (strain ATCC 17699 / DSM 428 / KCTC 22496 / NCIMB 10442 / H16 / Stanier 337) (Ralstonia eutropha).